Consider the following 232-residue polypeptide: LRRN4 C-terminal-like protein (232 aa).

A signal peptide spans 1 to 22 (MPHSPCLLWLLAVTSLVPGTQP). Topologically, residues 23–189 (LVAGDLEGDE…RLTVPPRPLT (167 aa)) are extracellular. Residues 77–172 (PPHPPRLGEV…GAEGLDSADG (96 aa)) enclose the Fibronectin type-III domain. An N-linked (GlcNAc...) asparagine glycan is attached at Asn-127. Residues 190–210 (LLHAAMGVGSALALLSCSALV) form a helical membrane-spanning segment. The Cytoplasmic portion of the chain corresponds to 211–232 (WHFCLRQRWGCPRRGRPSHAGL).

It is found in the membrane. The sequence is that of LRRN4 C-terminal-like protein (LRRN4CL) from Bos taurus (Bovine).